The chain runs to 688 residues: Elongation factor G (688 aa).

The tr-type G domain maps to 8 to 282 (INFRNFGIMA…AVVDFLPSPV (275 aa)). GTP-binding positions include 17–24 (AHIDAGKT), 81–85 (DTPGH), and 135–138 (NKMD).

Belongs to the TRAFAC class translation factor GTPase superfamily. Classic translation factor GTPase family. EF-G/EF-2 subfamily.

It is found in the cytoplasm. Its function is as follows. Catalyzes the GTP-dependent ribosomal translocation step during translation elongation. During this step, the ribosome changes from the pre-translocational (PRE) to the post-translocational (POST) state as the newly formed A-site-bound peptidyl-tRNA and P-site-bound deacylated tRNA move to the P and E sites, respectively. Catalyzes the coordinated movement of the two tRNA molecules, the mRNA and conformational changes in the ribosome. This is Elongation factor G (fusA) from Mycoplasma pneumoniae (strain ATCC 29342 / M129 / Subtype 1) (Mycoplasmoides pneumoniae).